We begin with the raw amino-acid sequence, 1307 residues long: Histone-lysine N-methyltransferase SETDB1 (1307 aa).

Positions 30–65 form a coiled coil; it reads VEELGISMEELRQYIDEELEKMDCIQQRKKQLAELE. A phosphoserine mark is found at serine 112 and serine 117. Phosphothreonine is present on threonine 120. A disordered region spans residues 127-148; sequence DEDDDVLSIDSGDAGSRTPKDQ. Residue lysine 182 forms a Glycyl lysine isopeptide (Lys-Gly) (interchain with G-Cter in SUMO2); alternate linkage. Lysine 182 is covalently cross-linked (Glycyl lysine isopeptide (Lys-Gly) (interchain with G-Cter in ubiquitin); alternate). Tudor domains lie at 257 to 320 and 347 to 403; these read KLFV…LKKT and LLKS…SMKT. Disordered regions lie at residues 404–424, 444–512, and 531–570; these read SSAS…PNMG, IQFK…TLSE, and SVTS…AFHG. Residues 454–467 are compositionally biased toward pro residues; that stretch reads PIAPPAPLPIPPLS. The segment covering 476–494 has biased composition (polar residues); it reads ESQLAQSRKQVAKKSTSFR. Residues 495–512 show a composition bias toward low complexity; the sequence is PGSVGSGHSSPTSSTLSE. A compositionally biased stretch (pro residues) spans 539 to 565; it reads AAPPVPPVPPGPPTPPGPPAPPGPLAP. The MBD domain maps to 611–682; sequence YRGKNPLLVP…EMFCLDPYVL (72 aa). The Pre-SET domain occupies 744–817; that stretch reads VGCDCKDGCR…MCTNRLVQHG (74 aa). Positions 746, 748, 752, 758, 760, 798, 802, 804, and 809 each coordinate Zn(2+). Residues 820 to 1282 form the SET domain; it reads VRLQLFKTQN…AGTELTWDYN (463 aa). S-adenosyl-L-methionine-binding positions include 830–832, aspartate 868, and tyrosine 870; that span reads KGW. Lysine 884 is covalently cross-linked (Glycyl lysine isopeptide (Lys-Gly) (interchain with G-Cter in ubiquitin)). The disordered stretch occupies residues 885 to 1174; the sequence is EGYESDVPTS…KNLSGPTKRQ (290 aa). The segment covering 913-924 has biased composition (acidic residues); the sequence is EDPEESNDDSSD. Residues 950 to 966 are compositionally biased toward basic and acidic residues; sequence GQKENELSEMTSKDSRP. Residue serine 1042 is modified to Phosphoserine. Basic and acidic residues predominate over residues 1048 to 1066; the sequence is FKDEGDNKQPKKEDPENRN. Lysine 1049 participates in a covalent cross-link: Glycyl lysine isopeptide (Lys-Gly) (interchain with G-Cter in SUMO2); alternate. Residue lysine 1049 forms a Glycyl lysine isopeptide (Lys-Gly) (interchain with G-Cter in SUMO1); alternate linkage. Glycyl lysine isopeptide (Lys-Gly) (interchain with G-Cter in SUMO2) cross-links involve residues lysine 1055 and lysine 1085. Positions 1097–1112 are enriched in polar residues; that stretch reads SVLQSQRVVTSTQSNP. Positions 1116 to 1131 are enriched in low complexity; it reads LTLSSSTESEGESGTS. The segment covering 1137–1156 has biased composition (polar residues); sequence GHTSATAVDSDDIQTISSGS. Lysine 1165 is covalently cross-linked (Glycyl lysine isopeptide (Lys-Gly) (interchain with G-Cter in SUMO2)). Lysine 1186 and lysine 1194 each carry N6,N6,N6-trimethyllysine; alternate. 2 positions are modified to N6,N6-dimethyllysine; alternate: lysine 1186 and lysine 1194. S-adenosyl-L-methionine-binding positions include arginine 1236 and 1239–1240; that span reads NH. Zn(2+) contacts are provided by cysteine 1242, cysteine 1295, cysteine 1297, and cysteine 1302. The 17-residue stretch at 1291 to 1307 folds into the Post-SET domain; it reads KELLCCCGAIECRGRLL.

This sequence belongs to the class V-like SAM-binding methyltransferase superfamily. Histone-lysine methyltransferase family. Suvar3-9 subfamily. Part of a complex containing at least CDYL, REST, WIZ, SETDB1, EHMT1 and EHMT2. Forms a complex with ATRX, TRIM28 and ZNF274. Probably part of a corepressor complex containing ZNF304, TRIM28, SETDB1 and DNMT1. Interacts with TRIM28/TIF1B. Interacts with ATF7IP and ATF7IP2; the interaction with ATF7IP is required to stimulate histone methyltransferase activity and facilitate the conversion of dimethylated to trimethylated H3 'Lys-9'. Interacts with MBD1; interaction is abolished when MBD1 is sumoylated. Interacts with CBX1 and CBX5. Interacts with DNMT3A and DNMT3B. Interacts with SUMO2. Interacts with MPHOSPH8. Interacts with ERG. Interacts with HDAC1, HDAC2, SIN3A, SIN3B. Interacts with ATRX. Interacts with RESF1. Interacts with ZNF638. Interacts with TASOR. Interacts with ZNF263; recruited to the SIX3 promoter along with other proteins involved in chromatin modification and transcriptional corepression where it contributes to transcriptional repression. Interacts with PHF13; the interaction probably enhances SETDB1 chromatin-associated levels and activity. Interacts with VRK1. Degraded by the proteasome, shielded by interaction with ATF7IP. Post-translationally, monoubiquitinated at Lys-884 by E2 enzymes UBE2E family. The conjugated-Ub is protected from deubiquitination through the SET domain. Monoubiquitination at Lys-884 is required for catalytic activity and H3K9 methylation and endogenous retrovirus silencing. Ubiquitously expressed. Strong expression in liver and testis. Expressed in the brain, lungs, kidneys, uterus and seminal vesicles.

Its subcellular location is the nucleus. It is found in the chromosome. The catalysed reaction is N(6),N(6)-dimethyl-L-lysyl(9)-[histone H3] + S-adenosyl-L-methionine = N(6),N(6),N(6)-trimethyl-L-lysyl(9)-[histone H3] + S-adenosyl-L-homocysteine + H(+). Its function is as follows. Histone methyltransferase that specifically trimethylates 'Lys-9' of histone H3. H3 'Lys-9' trimethylation represents a specific tag for epigenetic transcriptional repression by recruiting HP1 (CBX1, CBX3 and/or CBX5) proteins to methylated histones. Mainly functions in euchromatin regions, thereby playing a central role in the silencing of euchromatic genes. H3 'Lys-9' trimethylation is coordinated with DNA methylation. Probably forms a complex with MBD1 and ATF7IP that represses transcription and couples DNA methylation and histone 'Lys-9' trimethylation. Its activity is dependent on MBD1 and is heritably maintained through DNA replication by being recruited by CAF-1. SETDB1 is targeted to histone H3 by TRIM28/TIF1B, a factor recruited by KRAB zinc-finger proteins. Probably forms a corepressor complex required for activated KRAS-mediated promoter hypermethylation and transcriptional silencing of tumor suppressor genes (TSGs) or other tumor-related genes in colorectal cancer (CRC) cells. Required to maintain a transcriptionally repressive state of genes in undifferentiated embryonic stem cells (ESCs). In ESCs, in collaboration with TRIM28, is also required for H3K9me3 and silencing of endogenous and introduced retroviruses in a DNA-methylation independent-pathway. Associates at promoter regions of tumor suppressor genes (TSGs) leading to their gene silencing. The SETDB1-TRIM28-ZNF274 complex may play a role in recruiting ATRX to the 3'-exons of zinc-finger coding genes with atypical chromatin signatures to establish or maintain/protect H3K9me3 at these transcriptionally active regions. The protein is Histone-lysine N-methyltransferase SETDB1 of Mus musculus (Mouse).